The sequence spans 414 residues: Isocitrate dehydrogenase [NADP] cytoplasmic (414 aa).

The residue at position 2 (serine 2) is an N-acetylserine. The residue at position 42 (tyrosine 42) is a Phosphotyrosine. 75–77 (TIT) contacts NADP(+). Position 77 (threonine 77) interacts with substrate. At lysine 81 the chain carries N6-acetyllysine. Residue arginine 82 participates in NADP(+) binding. Substrate contacts are provided by residues 94–100 (SPNGTIR) and arginine 109. Lysine 126 bears the N6-succinyllysine mark. The substrate site is built by arginine 132 and lysine 212. Residues lysine 224, lysine 233, and lysine 243 each carry the N6-acetyllysine modification. Aspartate 252 is a binding site for Mn(2+). Residue lysine 260 coordinates NADP(+). Mn(2+) contacts are provided by aspartate 275 and aspartate 279. Position 310 to 315 (310 to 315 (GTVTRH)) interacts with NADP(+). Lysine 321 carries the N6-acetyllysine modification. Asparagine 328 is an NADP(+) binding site. Serine 389 carries the phosphoserine modification. Position 400 is an N6-succinyllysine (lysine 400).

This sequence belongs to the isocitrate and isopropylmalate dehydrogenases family. In terms of assembly, homodimer. Mg(2+) serves as cofactor. Requires Mn(2+) as cofactor. Post-translationally, acetylation at Lys-374 dramatically reduces catalytic activity.

The protein resides in the cytoplasm. It is found in the cytosol. The catalysed reaction is D-threo-isocitrate + NADP(+) = 2-oxoglutarate + CO2 + NADPH. Catalyzes the NADP(+)-dependent oxidative decarboxylation of isocitrate (D-threo-isocitrate) to 2-ketoglutarate (2-oxoglutarate), which is required by other enzymes such as the phytanoyl-CoA dioxygenase. Plays a critical role in the generation of NADPH, an important cofactor in many biosynthesis pathways. May act as a corneal epithelial crystallin and may be involved in maintaining corneal epithelial transparency. The sequence is that of Isocitrate dehydrogenase [NADP] cytoplasmic (IDH1) from Microtus ochrogaster (Prairie vole).